We begin with the raw amino-acid sequence, 343 residues long: Probable dual-specificity RNA methyltransferase RlmN (343 aa).

Glutamate 91 (proton acceptor) is an active-site residue. Positions 97 to 326 (HPDRITACIS…AEIRREKGSD (230 aa)) constitute a Radical SAM core domain. An intrachain disulfide couples cysteine 104 to cysteine 331. [4Fe-4S] cluster contacts are provided by cysteine 111, cysteine 115, and cysteine 118. S-adenosyl-L-methionine-binding positions include 158–159 (GE), serine 190, 213–215 (SLH), and asparagine 289. The S-methylcysteine intermediate role is filled by cysteine 331.

The protein belongs to the radical SAM superfamily. RlmN family. The cofactor is [4Fe-4S] cluster.

It localises to the cytoplasm. It catalyses the reaction adenosine(2503) in 23S rRNA + 2 reduced [2Fe-2S]-[ferredoxin] + 2 S-adenosyl-L-methionine = 2-methyladenosine(2503) in 23S rRNA + 5'-deoxyadenosine + L-methionine + 2 oxidized [2Fe-2S]-[ferredoxin] + S-adenosyl-L-homocysteine. The enzyme catalyses adenosine(37) in tRNA + 2 reduced [2Fe-2S]-[ferredoxin] + 2 S-adenosyl-L-methionine = 2-methyladenosine(37) in tRNA + 5'-deoxyadenosine + L-methionine + 2 oxidized [2Fe-2S]-[ferredoxin] + S-adenosyl-L-homocysteine. Specifically methylates position 2 of adenine 2503 in 23S rRNA and position 2 of adenine 37 in tRNAs. The polypeptide is Probable dual-specificity RNA methyltransferase RlmN (Thermotoga sp. (strain RQ2)).